The primary structure comprises 345 residues: Phosphoribosylformylglycinamidine cyclo-ligase (345 aa).

Belongs to the AIR synthase family.

Its subcellular location is the cytoplasm. It catalyses the reaction 2-formamido-N(1)-(5-O-phospho-beta-D-ribosyl)acetamidine + ATP = 5-amino-1-(5-phospho-beta-D-ribosyl)imidazole + ADP + phosphate + H(+). It participates in purine metabolism; IMP biosynthesis via de novo pathway; 5-amino-1-(5-phospho-D-ribosyl)imidazole from N(2)-formyl-N(1)-(5-phospho-D-ribosyl)glycinamide: step 2/2. The chain is Phosphoribosylformylglycinamidine cyclo-ligase from Escherichia coli (strain K12 / MC4100 / BW2952).